Reading from the N-terminus, the 299-residue chain is Large ribosomal subunit protein uL18 (299 aa).

It belongs to the universal ribosomal protein uL18 family. In terms of assembly, component of the large ribosomal subunit (LSU).

It is found in the cytoplasm. The protein localises to the nucleus. Its function is as follows. Component of the ribosome, a large ribonucleoprotein complex responsible for the synthesis of proteins in the cell. The small ribosomal subunit (SSU) binds messenger RNAs (mRNAs) and translates the encoded message by selecting cognate aminoacyl-transfer RNA (tRNA) molecules. The large subunit (LSU) contains the ribosomal catalytic site termed the peptidyl transferase center (PTC), which catalyzes the formation of peptide bonds, thereby polymerizing the amino acids delivered by tRNAs into a polypeptide chain. The nascent polypeptides leave the ribosome through a tunnel in the LSU and interact with protein factors that function in enzymatic processing, targeting, and the membrane insertion of nascent chains at the exit of the ribosomal tunnel. In Bombyx mori (Silk moth), this protein is Large ribosomal subunit protein uL18 (RpL5).